The chain runs to 170 residues: IMPACT family member YDL177C (170 aa).

Residues 79-98 (KKKGNKANKSNNSHVNKSRN) are disordered.

This sequence belongs to the IMPACT family.

In Saccharomyces cerevisiae (strain ATCC 204508 / S288c) (Baker's yeast), this protein is IMPACT family member YDL177C.